The chain runs to 171 residues: Ribosome maturation factor RimM (171 aa).

The PRC barrel domain maps to Glu-97–Leu-170.

The protein belongs to the RimM family. Binds ribosomal protein uS19.

It is found in the cytoplasm. In terms of biological role, an accessory protein needed during the final step in the assembly of 30S ribosomal subunit, possibly for assembly of the head region. Essential for efficient processing of 16S rRNA. May be needed both before and after RbfA during the maturation of 16S rRNA. It has affinity for free ribosomal 30S subunits but not for 70S ribosomes. The protein is Ribosome maturation factor RimM of Bacillus cytotoxicus (strain DSM 22905 / CIP 110041 / 391-98 / NVH 391-98).